Consider the following 381-residue polypeptide: Protein COS1 (381 aa).

Over 1–42 the chain is Cytoplasmic; that stretch reads MKENELKNEKSVDVLSFKQLESQKIVLPQDLFRSSFTWFCYE. A helical membrane pass occupies residues 43 to 63; that stretch reads IYKSLAFRIWMLLWLPLSVWW. Residues 64–72 lie on the Extracellular side of the membrane; that stretch reads KLSNNCIYP. Residues 73–93 traverse the membrane as a helical segment; the sequence is LIVSLLVLFLGPIFVLVICGL. Residues 94–231 are Cytoplasmic-facing; sequence SRKRSLSKQL…YRFKLTWFLK (138 aa). The helical transmembrane segment at 232–252 threads the bilayer; it reads RISNIFMLIPFLNFLCCIYVS. Over 253 to 254 the chain is Extracellular; sequence RG. A helical transmembrane segment spans residues 255–275; it reads MCLLLRTFYLGWILFMLVQGF. Topologically, residues 276–381 are cytoplasmic; the sequence is QNMRMIVLSV…QLSCSEESLA (106 aa).

It belongs to the DUP/COS family.

The protein resides in the membrane. The polypeptide is Protein COS1 (COS1) (Saccharomyces cerevisiae (strain ATCC 204508 / S288c) (Baker's yeast)).